A 429-amino-acid chain; its full sequence is Ribosomal RNA small subunit methyltransferase B (429 aa).

S-adenosyl-L-methionine-binding positions include 254–260, aspartate 277, aspartate 303, and aspartate 322; that span reads CAAPGGK. The Nucleophile role is filled by cysteine 375.

Belongs to the class I-like SAM-binding methyltransferase superfamily. RsmB/NOP family.

Its subcellular location is the cytoplasm. It catalyses the reaction cytidine(967) in 16S rRNA + S-adenosyl-L-methionine = 5-methylcytidine(967) in 16S rRNA + S-adenosyl-L-homocysteine + H(+). Specifically methylates the cytosine at position 967 (m5C967) of 16S rRNA. The sequence is that of Ribosomal RNA small subunit methyltransferase B from Escherichia coli O127:H6 (strain E2348/69 / EPEC).